The following is a 908-amino-acid chain: Probable disease resistance RPP8-like protein 4 (908 aa).

The stretch at 15–57 (DLLSRESERLQGIDEQLDGLKRQLRSLQSLLKDADAKKHGSDR) forms a coiled coil. Residues 146 to 459 (RQRVQREIRQ…AEGIYDGSTI (314 aa)) enclose the NB-ARC domain. 192 to 199 (GMGGIGKT) contacts ATP. LRR repeat units follow at residues 575-599 (LTLL…SIGG), 600-623 (LIHL…MRNL), and 842-867 (MPCL…KYIT).

Belongs to the disease resistance NB-LRR family. RPP8/HRT subfamily.

Functionally, potential disease resistance protein. This Arabidopsis thaliana (Mouse-ear cress) protein is Probable disease resistance RPP8-like protein 4 (RPP8L4).